Reading from the N-terminus, the 316-residue chain is Secondary metabolism regulator laeA (316 aa).

Belongs to the methyltransferase superfamily. LaeA methyltransferase family. In terms of assembly, component of the heterotrimeric velvet complex composed of laeA, veA and velB; VeA acting as a bridging protein between laeA and velB.

Its subcellular location is the nucleus. The catalysed reaction is L-methionyl-[protein] + S-adenosyl-L-methionine = S-methyl-L-methionyl-[protein] + S-adenosyl-L-homocysteine. Functionally, methyltransferase that performs automethylation. No other methyl-accepting substrate has been identified yet. Component of the velvet transcription factor complex that acts as a global regulator for secondary metabolite gene expression. Controls the biosynthetic gene cluster for beauvericin, a depsipeptide mycotoxin that functions as a virulence determinant. The velvet complex also regulates chromatin structure and transcription of siderophore biosynthetic genes and is required for infection of tomato plants. The velvet complex also governs expression of nitrate metabolism genes. This chain is Secondary metabolism regulator laeA, found in Fusarium oxysporum f. sp. lycopersici (strain 4287 / CBS 123668 / FGSC 9935 / NRRL 34936) (Fusarium vascular wilt of tomato).